We begin with the raw amino-acid sequence, 491 residues long: Aspartyl/glutamyl-tRNA(Asn/Gln) amidotransferase subunit B (491 aa).

Belongs to the GatB/GatE family. GatB subfamily. In terms of assembly, heterotrimer of A, B and C subunits.

It carries out the reaction L-glutamyl-tRNA(Gln) + L-glutamine + ATP + H2O = L-glutaminyl-tRNA(Gln) + L-glutamate + ADP + phosphate + H(+). It catalyses the reaction L-aspartyl-tRNA(Asn) + L-glutamine + ATP + H2O = L-asparaginyl-tRNA(Asn) + L-glutamate + ADP + phosphate + 2 H(+). In terms of biological role, allows the formation of correctly charged Asn-tRNA(Asn) or Gln-tRNA(Gln) through the transamidation of misacylated Asp-tRNA(Asn) or Glu-tRNA(Gln) in organisms which lack either or both of asparaginyl-tRNA or glutaminyl-tRNA synthetases. The reaction takes place in the presence of glutamine and ATP through an activated phospho-Asp-tRNA(Asn) or phospho-Glu-tRNA(Gln). The protein is Aspartyl/glutamyl-tRNA(Asn/Gln) amidotransferase subunit B of Parasynechococcus marenigrum (strain WH8102).